The primary structure comprises 212 residues: Root-specific lectin (212 aa).

The N-terminal stretch at 1–26 (MKMMSTRALALGAAAVLAFAAATAHA) is a signal peptide. Gln-27 carries the post-translational modification Pyrrolidone carboxylic acid. 4 consecutive Chitin-binding type-1 domains span residues 27-68 (QRCG…ACYT), 69-111 (SKRC…PCRA), 112-154 (DIKC…ACST), and 155-197 (DKPC…GCDG). 16 disulfides stabilise this stretch: Cys-29/Cys-44, Cys-38/Cys-50, Cys-43/Cys-57, Cys-61/Cys-66, Cys-72/Cys-87, Cys-81/Cys-93, Cys-86/Cys-100, Cys-104/Cys-109, Cys-115/Cys-130, Cys-124/Cys-136, Cys-129/Cys-143, Cys-147/Cys-152, Cys-158/Cys-173, Cys-167/Cys-179, Cys-172/Cys-186, and Cys-190/Cys-195. 36–38 (MEC) serves as a coordination point for substrate. 88–99 (SQWGYCGFGAEY) contacts substrate. Residue 140–141 (SE) coordinates substrate. N-linked (GlcNAc...) asparagine glycosylation occurs at Asn-206.

In terms of tissue distribution, in roots.

Functionally, carbohydrate binding. The chain is Root-specific lectin from Hordeum vulgare (Barley).